A 103-amino-acid polypeptide reads, in one-letter code: Cell division protein FtsB (103 aa).

Residues 1 to 3 lie on the Cytoplasmic side of the membrane; sequence MGK. A helical transmembrane segment spans residues 4–21; that stretch reads LTLLLLALLVWLQYSLWF. Topologically, residues 22-103 are periplasmic; the sequence is GKNGIHDYSR…RAATAGQTHR (82 aa). Residues 33 to 62 adopt a coiled-coil conformation; it reads NDDVVAQQATNAKLKARNDQLFAEIDDLNG.

It belongs to the FtsB family. In terms of assembly, part of a complex composed of FtsB, FtsL and FtsQ.

Its subcellular location is the cell inner membrane. Essential cell division protein. May link together the upstream cell division proteins, which are predominantly cytoplasmic, with the downstream cell division proteins, which are predominantly periplasmic. This chain is Cell division protein FtsB, found in Salmonella agona (strain SL483).